The following is a 223-amino-acid chain: Rho-related protein racE (223 aa).

18-25 (GDGAVGKT) provides a ligand contact to GTP. The Effector region signature appears at 40 to 48 (YVPTVFENY). Residues 65 to 69 (DTAGQ) and 123 to 126 (TKID) contribute to the GTP site. The interval 187–223 (GMDKKSQDGSSSASGVPSGDKPTKGKAGKKKSGCIIL) is disordered. Positions 210 to 223 (KGKAGKKKSGCIIL) are enriched in basic residues. Residue Cys220 is modified to Cysteine methyl ester. The S-geranylgeranyl cysteine moiety is linked to residue Cys220. A propeptide spans 221–223 (IIL) (removed in mature form).

Belongs to the small GTPase superfamily. Rho family. In terms of assembly, interacts with rgaA.

It is found in the cell membrane. Specifically required for cytokinesis. The polypeptide is Rho-related protein racE (racE) (Dictyostelium discoideum (Social amoeba)).